The chain runs to 191 residues: Leucyl/phenylalanyl-tRNA--protein transferase (191 aa).

This sequence belongs to the L/F-transferase family.

The protein resides in the cytoplasm. The enzyme catalyses N-terminal L-lysyl-[protein] + L-leucyl-tRNA(Leu) = N-terminal L-leucyl-L-lysyl-[protein] + tRNA(Leu) + H(+). It carries out the reaction N-terminal L-arginyl-[protein] + L-leucyl-tRNA(Leu) = N-terminal L-leucyl-L-arginyl-[protein] + tRNA(Leu) + H(+). It catalyses the reaction L-phenylalanyl-tRNA(Phe) + an N-terminal L-alpha-aminoacyl-[protein] = an N-terminal L-phenylalanyl-L-alpha-aminoacyl-[protein] + tRNA(Phe). Functions in the N-end rule pathway of protein degradation where it conjugates Leu, Phe and, less efficiently, Met from aminoacyl-tRNAs to the N-termini of proteins containing an N-terminal arginine or lysine. This is Leucyl/phenylalanyl-tRNA--protein transferase from Rubrobacter xylanophilus (strain DSM 9941 / JCM 11954 / NBRC 16129 / PRD-1).